Reading from the N-terminus, the 92-residue chain is Small ribosomal subunit protein uS19c (92 aa).

This sequence belongs to the universal ribosomal protein uS19 family.

It localises to the plastid. Its subcellular location is the chloroplast. Its function is as follows. Protein S19 forms a complex with S13 that binds strongly to the 16S ribosomal RNA. This chain is Small ribosomal subunit protein uS19c, found in Daucus carota (Wild carrot).